The sequence spans 90 residues: Small ribosomal subunit protein bS16 (90 aa).

Belongs to the bacterial ribosomal protein bS16 family.

This Lactococcus lactis subsp. cremoris (strain SK11) protein is Small ribosomal subunit protein bS16.